The primary structure comprises 550 residues: 65-kDa microtubule-associated protein 5 (550 aa).

Coiled-coil stretches lie at residues 46–174 and 288–310; these read NKKV…QKVN and IREA…KELV. The segment at 471–531 is disordered; sequence QFREQKRLQG…PGRSVTSGGK (61 aa). Residues 502-511 are compositionally biased toward polar residues; sequence QSLNTDNVTK.

Belongs to the MAP65/ASE1 family. In terms of assembly, forms a dimer. Binds to MT, mostly with coaligned MT, both between parallel or antiparallel, forming thick bundles. Bundles polymerized MT via the formation of 25-nm crossbridges with cortical MT.

It localises to the nucleus. The protein resides in the cytoplasm. Its subcellular location is the cytoskeleton. The protein localises to the spindle. It is found in the phragmoplast. It localises to the cell cortex. The protein resides in the cell junction. Its subcellular location is the plasmodesma. Microtubule-associated protein that bundle and stabilize adjacent microtubules (MT) of the cell cortex. Confers MT resistance to the drug oryzalin. Promotes the formation of a planar network of antiparallel microtubules. The chain is 65-kDa microtubule-associated protein 5 (MAP65-5) from Arabidopsis thaliana (Mouse-ear cress).